Consider the following 468-residue polypeptide: V-type proton ATPase subunit H (468 aa).

It belongs to the V-ATPase H subunit family. As to quaternary structure, V-ATPase is a heteromultimeric enzyme made up of two complexes: the ATP-hydrolytic V1 complex and the proton translocation V0 complex. The V1 complex consists of three catalytic AB heterodimers that form a heterohexamer, three peripheral stalks each consisting of EG heterodimers, one central rotor including subunits D and F, and the regulatory subunits C and H. The proton translocation complex V0 consists of the proton transport subunit a, a ring of proteolipid subunits c9c'', rotary subunit d, subunits e and f, and the accessory subunits VhaAC45 and ATP6AP2.

Subunit of the V1 complex of vacuolar(H+)-ATPase (V-ATPase), a multisubunit enzyme composed of a peripheral complex (V1) that hydrolyzes ATP and a membrane integral complex (V0) that translocates protons. V-ATPase is responsible for acidifying and maintaining the pH of intracellular compartments and in some cell types, is targeted to the plasma membrane, where it is responsible for acidifying the extracellular environment. Subunit H is essential for V-ATPase activity, but not for the assembly of the complex. This Drosophila melanogaster (Fruit fly) protein is V-type proton ATPase subunit H (VhaSFD).